A 546-amino-acid polypeptide reads, in one-letter code: uncharacterized protein (546 aa).

Disordered stretches follow at residues 37–101 (KEND…NQKL), 269–300 (QNKA…QPEV), and 392–443 (LSDL…TSAC). Composition is skewed to basic and acidic residues over residues 81-93 (DDVK…ENNQ) and 274-283 (ADLRKTESHG). Residues 284–298 (THSQSTPPQHSSSQP) are compositionally biased toward low complexity.

This is an uncharacterized protein from Homo sapiens (Human).